The chain runs to 305 residues: Protoheme IX farnesyltransferase (305 aa).

9 helical membrane-spanning segments follow: residues 29 to 49 (LIVFCAAIGMLLAVPGAPGLA), 55 to 75 (LWATLGIWLVASAAAAFNCLI), 101 to 121 (ALIFSAVLCSAGMAVLHEAVN), 123 to 143 (LTAWLTLGTFVGYAVIYTVVL), 151 to 171 (IVIGGISGAMPPLLGWAAMTG), 177 to 197 (GLILCLIIFLWTPPHFWALAL), 219 to 241 (FTRLQILLYTFVLLAGTLLPFVQ), 246 to 268 (WLYLAAAFVLGLRFIHYAWRLWR), and 283 to 303 (IWHLSLLFAALLVDHYTQDLL).

The protein belongs to the UbiA prenyltransferase family. Protoheme IX farnesyltransferase subfamily.

The protein localises to the cell inner membrane. It carries out the reaction heme b + (2E,6E)-farnesyl diphosphate + H2O = Fe(II)-heme o + diphosphate. It participates in porphyrin-containing compound metabolism; heme O biosynthesis; heme O from protoheme: step 1/1. Converts heme B (protoheme IX) to heme O by substitution of the vinyl group on carbon 2 of heme B porphyrin ring with a hydroxyethyl farnesyl side group. This Leptothrix cholodnii (strain ATCC 51168 / LMG 8142 / SP-6) (Leptothrix discophora (strain SP-6)) protein is Protoheme IX farnesyltransferase.